The chain runs to 524 residues: MTTTTQSEQDRVIIFDTTLRDGEQCPGATMTFEEKLNVARMLDDMGVDVIEAGYPFASDGDFEAVHEIAKRSKNSVICGLSRAAHKDIDRCAEAIKPAERGRIHTFLSTSPVHMKYKLQMEAAQVYEMVISSVTRARNHTDDVEWSAEDATRTEFDFLCRCIEAAIKAGATTINLPDTVGYAVPEEYRELFRKVRETVPNSDKARFSVHCHNDLGMAVANSMAGVAGGARQIECTINGIGERAGNAALEEVVMAMRVRQDKLPYWNRIETTMLTHASKTVSAATSFPVQYNKAIVGRNAFAHESGIHQDGMIKNAQTYEIMTPETVGVKGTSLVMGKHSGRAGLIHKMEELGYKLSRNQIEDVFVRFKALADRKKDVYDEDIEALVDEQLLHGQDQIKLMSLTVIAGTHGPQRATMKLDVDGQIRIEEAEGNGPVDAVFNCIKALVPHDAKLELYQVHAVTEGTDAQAEVSVRLSHEGRSMTARAADPDTLVASAKAYLGALNKIVAKRQRSVREDAPTVAVAG.

The 263-residue stretch at 12–274 (VIIFDTTLRD…WNRIETTMLT (263 aa)) folds into the Pyruvate carboxyltransferase domain. 4 residues coordinate Mn(2+): aspartate 21, histidine 209, histidine 211, and asparagine 245. A regulatory domain region spans residues 398–524 (KLMSLTVIAG…EDAPTVAVAG (127 aa)).

Belongs to the alpha-IPM synthase/homocitrate synthase family. LeuA type 1 subfamily. In terms of assembly, homodimer. Mn(2+) is required as a cofactor.

Its subcellular location is the cytoplasm. The enzyme catalyses 3-methyl-2-oxobutanoate + acetyl-CoA + H2O = (2S)-2-isopropylmalate + CoA + H(+). It participates in amino-acid biosynthesis; L-leucine biosynthesis; L-leucine from 3-methyl-2-oxobutanoate: step 1/4. Functionally, catalyzes the condensation of the acetyl group of acetyl-CoA with 3-methyl-2-oxobutanoate (2-ketoisovalerate) to form 3-carboxy-3-hydroxy-4-methylpentanoate (2-isopropylmalate). The polypeptide is 2-isopropylmalate synthase (Rhodopseudomonas palustris (strain TIE-1)).